The chain runs to 841 residues: Follistatin-related protein 4 (841 aa).

The first 22 residues, 1 to 22 (MKPGGFWPHLALLGVSLPAVLG), serve as a signal peptide directing secretion. The disordered stretch occupies residues 29–54 (SRSPNMVPGESQAEETRGFEVTRREG). Positions 42–54 (EETRGFEVTRREG) are enriched in basic and acidic residues. The Kazal-like domain maps to 80 to 134 (TTGQPSCQCLEVCRPRYMPVCGSDGRLYGNHCELRRAACLLGKRIVSVHSKDCFL). 3 cysteine pairs are disulfide-bonded: cysteine 86/cysteine 118, cysteine 92/cysteine 111, and cysteine 100/cysteine 132. EF-hand domains follow at residues 173–208 (QKRL…EQDM) and 225–247 (DYNS…IQLS). Ca(2+) is bound by residues aspartate 186, aspartate 188, asparagine 190, histidine 192, glutamate 197, aspartate 225, asparagine 227, aspartate 229, serine 231, and glutamate 236. Ig-like domains follow at residues 250–336 (PEDK…VLQV) and 340–425 (PVIR…EDIS). Cystine bridges form between cysteine 269–cysteine 320 and cysteine 361–cysteine 412. Asparagine 317 is a glycosylation site (N-linked (GlcNAc...) asparagine).

Its subcellular location is the secreted. This is Follistatin-related protein 4 (Fstl4) from Mus musculus (Mouse).